The primary structure comprises 464 residues: Arginine biosynthesis bifunctional protein ArgJ, chloroplastic (464 aa).

Substrate contacts are provided by threonine 208, lysine 234, threonine 245, glutamate 332, asparagine 459, and threonine 464. Catalysis depends on threonine 245, which acts as the Nucleophile.

Belongs to the ArgJ family. As to quaternary structure, heterodimer of an alpha and a beta chain.

It localises to the plastid. Its subcellular location is the chloroplast. It catalyses the reaction N(2)-acetyl-L-ornithine + L-glutamate = N-acetyl-L-glutamate + L-ornithine. It carries out the reaction L-glutamate + acetyl-CoA = N-acetyl-L-glutamate + CoA + H(+). It participates in amino-acid biosynthesis; L-arginine biosynthesis; L-ornithine and N-acetyl-L-glutamate from L-glutamate and N(2)-acetyl-L-ornithine (cyclic): step 1/1. The protein operates within amino-acid biosynthesis; L-arginine biosynthesis; N(2)-acetyl-L-ornithine from L-glutamate: step 1/4. Its function is as follows. Catalyzes two activities which are involved in the cyclic version of arginine biosynthesis: the synthesis of acetylglutamate from glutamate and acetyl-CoA, and of ornithine by transacetylation between acetylornithine and glutamate. In Sorghum bicolor (Sorghum), this protein is Arginine biosynthesis bifunctional protein ArgJ, chloroplastic.